The chain runs to 30 residues: Rothein 3.1 (30 aa).

Leu-30 is subject to Leucine amide.

Expressed by the skin dorsal glands.

The protein localises to the secreted. In terms of biological role, lacks antimicrobial activity. Does not inhibit the formation of NO by neuronal nitric oxide. This chain is Rothein 3.1, found in Litoria rothii (Roth's tree frog).